Consider the following 322-residue polypeptide: Transcription factor WRKY45-2 (322 aa).

The segment at Gly67–Asn110 is disordered. Positions Val112 to Pro180 form a DNA-binding region, WRKY. Positions Ser256–Asp284 are disordered.

Belongs to the WRKY group III family. Expressed in aleurone cells.

The protein localises to the nucleus. Transcriptional activator involved in defense responses against pathogens. Acts as a positive regulator of defense responses against the rice blast fungus Magnaporthe oryzae. Acts as a positive regulator of defense responses against the bacterial blight Xanthomonas oryzae pv oryzae (Xoo) and the bacterial streak Xanthomonas oryzae pv oryzicola (Xoc). Acts as a positive regulator of abscisic acid (ABA) signaling that suppresses growth of seedlings. Acts as a negative regulator of salt stress response. Acts as a negative regulator of cold stress response. Acts as a negative regulator of drought stress response. This Oryza sativa subsp. indica (Rice) protein is Transcription factor WRKY45-2.